A 359-amino-acid chain; its full sequence is MTFDSQAYAAQLEDKVTRLRDLLAPFDAPEPTVFDSPLQNFRLRAEFRLWREGGERHYAMFSQDDKRTPILIEEFPIASLRINQLMPQLKAAWQASAALSHKLFQVEFLTTLAGDAMITLCYHRPLDEHWHAAATKLATDLGVSIIGRSKGKREVLGLDYVVEKLDVGGRTFSYRQPEGAFTQPNGTVNQKMLNWAYEALGDRSDDLLELYCGNGNFTLPLATRVRKVLATEISKTSVNAALSNLAENAVDNVTLVRLSAEELTEALNEVRPFRRLHGIDLKSYEFGSVFVDPPRAGMDPDTCELTRRFDNILYISCNPETLAANIAQLHDTHRITRCALFDQFPWTHHMESGVLLTRR.

The S-adenosyl-L-methionine site is built by glutamine 183, tyrosine 211, asparagine 216, glutamate 232, and aspartate 292. Cysteine 317 serves as the catalytic Nucleophile. The Proton acceptor role is filled by glutamate 351.

The protein belongs to the class I-like SAM-binding methyltransferase superfamily. RNA M5U methyltransferase family. TrmA subfamily.

It carries out the reaction uridine(54) in tRNA + S-adenosyl-L-methionine = 5-methyluridine(54) in tRNA + S-adenosyl-L-homocysteine + H(+). The catalysed reaction is uridine(341) in tmRNA + S-adenosyl-L-methionine = 5-methyluridine(341) in tmRNA + S-adenosyl-L-homocysteine + H(+). Functionally, dual-specificity methyltransferase that catalyzes the formation of 5-methyluridine at position 54 (m5U54) in all tRNAs, and that of position 341 (m5U341) in tmRNA (transfer-mRNA). This Pseudomonas fluorescens (strain Pf0-1) protein is tRNA/tmRNA (uracil-C(5))-methyltransferase.